A 159-amino-acid polypeptide reads, in one-letter code: Small ribosomal subunit protein uS5c (159 aa).

The S5 DRBM domain maps to Trp17–Val80.

The protein belongs to the universal ribosomal protein uS5 family. As to quaternary structure, part of the 30S ribosomal subunit. Contacts protein S4.

It localises to the plastid. It is found in the chloroplast. Functionally, with S4 and S12 plays an important role in translational accuracy. The sequence is that of Small ribosomal subunit protein uS5c (rps5) from Emiliania huxleyi (Coccolithophore).